Consider the following 490-residue polypeptide: Ribosome biogenesis protein YTM1 (490 aa).

Positions 1-22 are disordered; sequence MDGLEDGPLDASTATSQKPQRQ. The tract at residues 23–104 is ubiquitin-like (UBL) domain; it reads VRLKLTSRHE…ETTLDVEYVR (82 aa). 7 WD repeats span residues 116–168, 175–213, 224–263, 298–338, 340–379, 385–425, and 449–487; these read LHDD…IALS, GHTA…DGFS, GHKG…NPAA, SHTA…LVDT, TASH…TTVS, GHTN…TDKD, and GEGV…PNGG. Positions 255–286 are disordered; that stretch reads TRKSENPAAPESLLPSNTSRSSKRRKLNSSVS.

This sequence belongs to the WD repeat WDR12/YTM1 family. As to quaternary structure, component of the NOP7 complex, composed of ERB1, NOP7 and YTM1. The complex is held together by ERB1, which interacts with NOP7 via its N-terminal domain and with YTM1 via a high-affinity interaction between the seven-bladed beta-propeller domains of the 2 proteins. The NOP7 complex associates with the 66S pre-ribosome. Interacts (via UBL domain) with MDN1 (via VWFA/MIDAS domain).

Its subcellular location is the nucleus. The protein localises to the nucleolus. It is found in the nucleoplasm. Functionally, component of the NOP7 complex, which is required for maturation of the 25S and 5.8S ribosomal RNAs and formation of the 60S ribosome. This is Ribosome biogenesis protein YTM1 from Ajellomyces capsulatus (strain NAm1 / WU24) (Darling's disease fungus).